Consider the following 156-residue polypeptide: Small ribosomal subunit protein uS7c (156 aa).

The protein belongs to the universal ribosomal protein uS7 family. As to quaternary structure, part of the 30S ribosomal subunit.

The protein localises to the plastid. The protein resides in the chloroplast. Its function is as follows. One of the primary rRNA binding proteins, it binds directly to 16S rRNA where it nucleates assembly of the head domain of the 30S subunit. This chain is Small ribosomal subunit protein uS7c (rps7), found in Zamia furfuracea (Cardboard cycad).